We begin with the raw amino-acid sequence, 290 residues long: Sodium/potassium-transporting ATPase subunit beta-2 (290 aa).

At 1 to 39 the chain is on the cytoplasmic side; it reads MVIQKEKKSCGQVVEEWKEFVWNPRTHQFMGRTGTSWAF. A helical; Signal-anchor for type II membrane protein membrane pass occupies residues 40–67; the sequence is ILLFYLVFYGFLTAMFTLTMWVMLQTVS. Residues 68–290 are Extracellular-facing; sequence DHTPKYQDRL…VAFKLRINKT (223 aa). N-linked (GlcNAc...) asparagine glycans are attached at residues asparagine 96 and asparagine 118. Residues cysteine 129 and cysteine 150 are joined by a disulfide bond. N-linked (GlcNAc...) asparagine glycosylation is found at asparagine 153 and asparagine 159. An intrachain disulfide couples cysteine 160 to cysteine 177. Asparagine 193, asparagine 197, and asparagine 238 each carry an N-linked (GlcNAc...) asparagine glycan. The interval 193 to 290 is immunoglobulin-like; the sequence is NQSMNVTCAG…VAFKLRINKT (98 aa). A disulfide bridge connects residues cysteine 200 and cysteine 261.

This sequence belongs to the X(+)/potassium ATPases subunit beta family. As to quaternary structure, the sodium/potassium-transporting ATPase is composed of a catalytic alpha subunit, an auxiliary non-catalytic beta subunit and an additional regulatory subunit. Interacts with BSG.

It is found in the cell membrane. In terms of biological role, this is the non-catalytic component of the active enzyme, which catalyzes the hydrolysis of ATP coupled with the exchange of Na(+) and K(+) ions across the plasma membrane. The exact function of the beta-2 subunit is not known. Functionally, mediates cell adhesion of neurons and astrocytes, and promotes neurite outgrowth. The sequence is that of Sodium/potassium-transporting ATPase subunit beta-2 (ATP1B2) from Ochotona curzoniae (Black-lipped pika).